Consider the following 206-residue polypeptide: D-ribitol-5-phosphate phosphatase (206 aa).

Residue Asp-8 is the Nucleophile of the active site. Mg(2+) contacts are provided by Asp-8 and Asp-172.

This sequence belongs to the HAD-like hydrolase superfamily. The cofactor is Mg(2+).

It catalyses the reaction D-ribitol 1-phosphate + H2O = ribitol + phosphate. The enzyme catalyses D-ribitol 5-phosphate + H2O = ribitol + phosphate. The catalysed reaction is 5-amino-6-(5-phospho-D-ribitylamino)uracil + H2O = 5-amino-6-(D-ribitylamino)uracil + phosphate. It participates in cofactor biosynthesis; riboflavin biosynthesis; 5-amino-6-(D-ribitylamino)uracil from GTP: step 4/4. Its function is as follows. Catalyzes the dephosphorylation of D-ribitol-5-phosphate and D-ribitol-1-phosphate. Is also able to dephosphorylate 5-amino-6-(5-phospho-D-ribitylamino)uracil, and thus could be involved in the riboflavin biosynthesis pathway. This Bacteroides thetaiotaomicron (strain ATCC 29148 / DSM 2079 / JCM 5827 / CCUG 10774 / NCTC 10582 / VPI-5482 / E50) protein is D-ribitol-5-phosphate phosphatase.